Consider the following 130-residue polypeptide: Glycine cleavage system H protein (130 aa).

Residues 24–106 (GIKVGISAFA…YQEGWLLKIT (83 aa)) form the Lipoyl-binding domain. Lys65 carries the N6-lipoyllysine modification.

Belongs to the GcvH family. In terms of assembly, the glycine cleavage system is composed of four proteins: P, T, L and H. (R)-lipoate is required as a cofactor.

Functionally, the glycine cleavage system catalyzes the degradation of glycine. The H protein shuttles the methylamine group of glycine from the P protein to the T protein. The polypeptide is Glycine cleavage system H protein (Synechococcus sp. (strain RCC307)).